The primary structure comprises 397 residues: Ethanolaminephosphotransferase 1 (397 aa).

The residue at position 2 (Ala-2) is an N-acetylalanine. 10 helical membrane-spanning segments follow: residues 47–69, 84–103, 123–145, 150–172, 179–201, 221–243, 256–278, 291–310, 317–339, and 344–366; these read WLAPNLITFSGFLLVVFNFLLMA, HVPDWVWIVVGILNFVAYTL, LFDHGLDSWSCVYFVVTVYSIFG, GVSVFVLYLLLWVVLFSFILSHW, ILFLPWGYDISQVTISFVYIVTA, LFTAMIIGCALCVTLPMSLLNFF, VYEAMVPLFSPCLLFILSTAWIL, VFYFMVGTAFANSTCQLIVC, CPTLNWLLVPLFLVVLVVNLGVA, and SILLYTLTTAFTLAHIHYGVRVV. Sec-387 is a non-standard amino acid (selenocysteine).

The protein belongs to the CDP-alcohol phosphatidyltransferase class-I family. It depends on Mg(2+) as a cofactor. The cofactor is Mn(2+). Widely expressed. Abundant in brain, placenta, liver and pancreas, followed by heart, skeletal muscle, lung and kidney. In brain it is strongly expressed in cerebellum, followed by the occipital pole and the frontal lobe.

Its subcellular location is the endoplasmic reticulum membrane. It carries out the reaction CDP-ethanolamine + a 1,2-diacyl-sn-glycerol = a 1,2-diacyl-sn-glycero-3-phosphoethanolamine + CMP + H(+). The enzyme catalyses 1-O-alkyl-2-acyl-sn-glycerol + CDP-ethanolamine = a 1-O-alkyl-2-acyl-sn-glycero-3-phosphoethanolamine + CMP + H(+). Its pathway is phospholipid metabolism; phosphatidylethanolamine biosynthesis; phosphatidylethanolamine from ethanolamine: step 3/3. Its function is as follows. Ethanolaminephosphotransferase that catalyzes the transfer of phosphoethanolamine (PE) from CDP-ethanolamine to lipid acceptors, the final step in the synthesis of PE via the 'Kennedy' pathway. PE is the second most abundant phospholipid of membranes in mammals and is involved in various membrane-related cellular processes. The enzyme is critical for the synthesis of several PE species and also catalyzes the synthesis of plasmanyl-PE, a lipid required for proper myelination and neurodevelopment, from 1-alkyl-2-acylglycerol. In Homo sapiens (Human), this protein is Ethanolaminephosphotransferase 1.